Consider the following 359-residue polypeptide: Phosphate acyltransferase (359 aa).

Belongs to the PlsX family. As to quaternary structure, homodimer. Probably interacts with PlsY.

Its subcellular location is the cytoplasm. It carries out the reaction a fatty acyl-[ACP] + phosphate = an acyl phosphate + holo-[ACP]. The protein operates within lipid metabolism; phospholipid metabolism. Functionally, catalyzes the reversible formation of acyl-phosphate (acyl-PO(4)) from acyl-[acyl-carrier-protein] (acyl-ACP). This enzyme utilizes acyl-ACP as fatty acyl donor, but not acyl-CoA. The chain is Phosphate acyltransferase from Citrobacter koseri (strain ATCC BAA-895 / CDC 4225-83 / SGSC4696).